The following is a 138-amino-acid chain: ATP synthase epsilon chain (138 aa).

This sequence belongs to the ATPase epsilon chain family. As to quaternary structure, F-type ATPases have 2 components, CF(1) - the catalytic core - and CF(0) - the membrane proton channel. CF(1) has five subunits: alpha(3), beta(3), gamma(1), delta(1), epsilon(1). CF(0) has three main subunits: a, b and c.

The protein resides in the cell membrane. Functionally, produces ATP from ADP in the presence of a proton gradient across the membrane. The protein is ATP synthase epsilon chain (atpC) of Buchnera aphidicola subsp. Schizaphis graminum (strain Sg).